We begin with the raw amino-acid sequence, 299 residues long: Taste receptor type 2 member 50 (299 aa).

Methionine 1 is a topological domain (extracellular). A helical transmembrane segment spans residues 2–22; sequence ITFLYIFFSILIMVLFVLGNF. Over 23–55 the chain is Cytoplasmic; sequence ANGFIALVNFIDWVKRKKISSADQILTALAVSR. A helical membrane pass occupies residues 56-76; sequence IGLLWTLLLNWYLTVLNPAFY. The Extracellular portion of the chain corresponds to 77–87; it reads SVELRITSYNA. A helical membrane pass occupies residues 88 to 108; the sequence is WVVTNHFSMWLAASLSIFYLL. The Cytoplasmic segment spans residues 109-126; sequence KIANFSNLIFLHLKRRVR. The chain crosses the membrane as a helical span at residues 127 to 147; it reads SVILVILLGTLIFLVCHLLVA. Residues 148–181 lie on the Extracellular side of the membrane; that stretch reads NMDESMWAEEYEGNITGKMKLRNTVHLSYLTVTT. Residue asparagine 161 is glycosylated (N-linked (GlcNAc...) asparagine). The helical transmembrane segment at 182-202 threads the bilayer; it reads LWSFIPFTLSLISFLMLICSL. At 203–229 the chain is on the cytoplasmic side; sequence CKHLKKMQLHGEGSQDLSTKVHIKALQ. A helical transmembrane segment spans residues 230 to 250; sequence TLISFLLLCAIFFLFLIISVW. Residues 251–259 are Extracellular-facing; it reads SPRRLRNDP. Residues 260–280 form a helical membrane-spanning segment; sequence VVMVSKAVGNIYLAFDSFILI. The Cytoplasmic segment spans residues 281 to 299; the sequence is WRTKKLKHTFLLILCQIRC.

Belongs to the G-protein coupled receptor T2R family.

The protein resides in the membrane. Receptor that may play a role in the perception of bitterness and is gustducin-linked. May play a role in sensing the chemical composition of the gastrointestinal content. The activity of this receptor may stimulate alpha gustducin, mediate PLC-beta-2 activation and lead to the gating of TRPM5. This Pan paniscus (Pygmy chimpanzee) protein is Taste receptor type 2 member 50 (TAS2R50).